The sequence spans 193 residues: Putative F-box protein At1g31072 (193 aa).

The 50-residue stretch at 4-53 (EKTLDSIPIDVFLDIFSRLPAKSVGRSCCVSNRWASILGSQDFKELFLTM) folds into the F-box domain.

The polypeptide is Putative F-box protein At1g31072 (Arabidopsis thaliana (Mouse-ear cress)).